A 442-amino-acid polypeptide reads, in one-letter code: Histidinol dehydrogenase (442 aa).

3 residues coordinate NAD(+): Tyr-132, Gln-194, and Asn-217. 3 residues coordinate substrate: Ser-243, Gln-265, and His-268. Gln-265 and His-268 together coordinate Zn(2+). Residues Glu-332 and His-333 each act as proton acceptor in the active site. Residues His-333, Asp-366, Glu-420, and His-425 each contribute to the substrate site. Asp-366 is a binding site for Zn(2+). His-425 serves as a coordination point for Zn(2+).

It belongs to the histidinol dehydrogenase family. It depends on Zn(2+) as a cofactor.

The catalysed reaction is L-histidinol + 2 NAD(+) + H2O = L-histidine + 2 NADH + 3 H(+). It participates in amino-acid biosynthesis; L-histidine biosynthesis; L-histidine from 5-phospho-alpha-D-ribose 1-diphosphate: step 9/9. Catalyzes the sequential NAD-dependent oxidations of L-histidinol to L-histidinaldehyde and then to L-histidine. The polypeptide is Histidinol dehydrogenase (Idiomarina loihiensis (strain ATCC BAA-735 / DSM 15497 / L2-TR)).